The chain runs to 758 residues: General transcription and DNA repair factor IIH helicase subunit XPD (758 aa).

A Helicase ATP-binding domain is found at 7 to 285 (DVTVYFPYDN…TDAGRLRAEY (279 aa)). 42-49 (MPTGTGKT) provides a ligand contact to ATP. [4Fe-4S] cluster-binding residues include C116, C134, C155, and C190. The DEAH box signature appears at 234–238 (DEAHN).

Belongs to the helicase family. RAD3/XPD subfamily. In terms of assembly, component of the 7-subunit TFIIH core complex composed of XPB, XPD, TFB1/GTF2H1, GTF2H2/P44, TFB4/GTF2H3, TFB2/GTF2H4 and TFB5/GTF2H5, which is active in NER. The core complex associates with the 3-subunit CDK-activating kinase (CAK) module composed of CYCH1/cyclin H1, CDKD and MAT1/At4g30820 to form the 10-subunit holoenzyme (holo-TFIIH) active in transcription. Interacts with GTF2H2/p44. It depends on [4Fe-4S] cluster as a cofactor. In terms of tissue distribution, expressed at low levels in all tissues.

Its subcellular location is the nucleus. The enzyme catalyses Couples ATP hydrolysis with the unwinding of duplex DNA at the replication fork by translocating in the 5'-3' direction. This creates two antiparallel DNA single strands (ssDNA). The leading ssDNA polymer is the template for DNA polymerase III holoenzyme which synthesizes a continuous strand.. The catalysed reaction is ATP + H2O = ADP + phosphate + H(+). Functionally, ATP-dependent 5'-3' DNA helicase, component of the general transcription and DNA repair factor IIH (TFIIH) core complex, which is involved in general and transcription-coupled nucleotide excision repair (NER) of damaged DNA and, when complexed to CDK-activating kinase (CAK), involved in transcription by RNA polymerase II. In NER, TFIIH acts by opening DNA around the lesion to allow the excision of the damaged oligonucleotide and its replacement by a new DNA fragment. The ATP-dependent helicase activity of XPD is required for DNA opening. In transcription, TFIIH has an essential role in transcription initiation. When the pre-initiation complex (PIC) has been established, TFIIH is required for promoter opening and promoter escape. Phosphorylation of the C-terminal tail (CTD) of the largest subunit of RNA polymerase II by the kinase module CAK controls the initiation of transcription. XPD acts by forming a bridge between CAK and the core-TFIIH complex. Essential during plant growth. May negatively regulate a common response program mediated by UV damage and heat stress, that leads to tissue death and reduced chloroplast function. The protein is General transcription and DNA repair factor IIH helicase subunit XPD of Arabidopsis thaliana (Mouse-ear cress).